A 273-amino-acid chain; its full sequence is Small ribosomal subunit protein uS2 (273 aa).

The disordered stretch occupies residues 244–273 (SDEEANSSAEENENRQEDLLAKKYDSSEAN). The segment covering 255-273 (NENRQEDLLAKKYDSSEAN) has biased composition (basic and acidic residues).

The protein belongs to the universal ribosomal protein uS2 family.

In Chlamydia felis (strain Fe/C-56) (Chlamydophila felis), this protein is Small ribosomal subunit protein uS2.